Here is a 283-residue protein sequence, read N- to C-terminus: Thymidylate synthase (283 aa).

Arg22 provides a ligand contact to dUMP. The Nucleophile role is filled by Cys160. DUMP contacts are provided by residues 180–183 (RSCD), Asn191, and 221–223 (HIY). Asp183 contributes to the (6R)-5,10-methylene-5,6,7,8-tetrahydrofolate binding site. Ser282 contacts (6R)-5,10-methylene-5,6,7,8-tetrahydrofolate.

This sequence belongs to the thymidylate synthase family. Bacterial-type ThyA subfamily. As to quaternary structure, homodimer.

The protein localises to the cytoplasm. The enzyme catalyses dUMP + (6R)-5,10-methylene-5,6,7,8-tetrahydrofolate = 7,8-dihydrofolate + dTMP. It functions in the pathway pyrimidine metabolism; dTTP biosynthesis. Functionally, catalyzes the reductive methylation of 2'-deoxyuridine-5'-monophosphate (dUMP) to 2'-deoxythymidine-5'-monophosphate (dTMP) while utilizing 5,10-methylenetetrahydrofolate (mTHF) as the methyl donor and reductant in the reaction, yielding dihydrofolate (DHF) as a by-product. This enzymatic reaction provides an intracellular de novo source of dTMP, an essential precursor for DNA biosynthesis. The sequence is that of Thymidylate synthase from Aliivibrio fischeri (strain ATCC 700601 / ES114) (Vibrio fischeri).